The chain runs to 161 residues: Bacterial E2-like ubiquitin protein BilB (161 aa).

Cysteine 113 acts as the Glycyl thioester intermediate in catalysis.

Component of the Bil (bacterial ISG15-like) antiviral defense system, composed of BilA, BilB, BilC and BilD. The Bil system specifically conjugates a ubiquitin-like moiety (bilA) to the bacteriophage central tail fiber (CTF, or tip attachment protein J) via reactions involving E1 (bilD) and E2 (bilB). Modifies CTF of phage SECphi27 and SECphi4, which probably interferes with assembly of the phage tail. Also modifies T5 baseplate hub protein pb3 (gene D16), but not gp27 of phage T6 (Bil defends against T6). BilB probably accepts ubiquitin from the BilA-BilD (E1) complex and catalyzes its covalent attachment to target protein (CTF). Bil-encoding bacteria produce mostly defective phage SECphi27, many of which have phage assembly defects, including no tails. SECphi27 phage progeny produced in E.coli with the Bil system inject less DNA into naive host cells, maybe because the phage are less able to adsorb and inject their DNA into host cells. Its function is as follows. Expression of the Bil system in E.coli (strain MG1655) confers about 100-fold resistance to phage SECphi27, SECphi18, SECphi6, SECphi4 and T5, but not to SECphi17. When cells expressing the Bil system are infected by phage SECphi27 at low multiplicity of infection (0.03 MOI) the culture survives, at 3.0 MOI the culture collapses at the same time as cells without the Bil system. This chain is Bacterial E2-like ubiquitin protein BilB, found in Collimonas sp. (strain OK412).